The primary structure comprises 79 residues: Serine rich endogenous peptide 2 (79 aa).

Positions 1 to 19 (MANNLGLVILLLVIVLVSC) are cleaved as a signal peptide. Residues 25–79 (CALASPQKSRPSSEWRRKLIPVRSSRSPRSPSFAPKKPPPPPPSPPLSPSSPPSN) form a disordered region. An SCOOP motif motif is present at residues 45-57 (PVRSSRSPRSPSF). Residues 45–59 (PVRSSRSPRSPSFAP) are compositionally biased toward low complexity. Residues 49–51 (SRS) carry the SxS motif essential for MIK2 binding motif. Residues 60-79 (KKPPPPPPSPPLSPSSPPSN) show a composition bias toward pro residues.

It belongs to the serine rich endogenous peptide (SCOOP) phytocytokine family. As to quaternary structure, interacts with MIK2 (via extracellular leucine-rich repeat domain); this interaction triggers the formation of complex between MIK2 and the BAK1/SERK3 and SERK4 coreceptors, and subsequent BAK1 activation by phosphorylation.

Its subcellular location is the cell membrane. It localises to the secreted. The protein resides in the extracellular space. The protein localises to the apoplast. Functionally, brassicaceae-specific phytocytokine (plant endogenous peptide released into the apoplast) perceived by MIK2 in a BAK1/SERK3 and SERK4 coreceptors-dependent manner, that modulates various physiological and antimicrobial processes including growth prevention and reactive oxygen species (ROS) response regulation. In Arabidopsis thaliana (Mouse-ear cress), this protein is Serine rich endogenous peptide 2.